The primary structure comprises 2113 residues: Ninein (2113 aa).

EF-hand domains follow at residues 8-43 (QHEA…LCLE) and 42-77 (LEDV…ILSR). The residue at position 152 (Ser-152) is a Phosphoserine. EF-hand domains follow at residues 182–217 (WIEE…YGLQ) and 219–252 (VDGA…TGKS). 245 to 252 (GLFKTGKS) provides a ligand contact to GTP. A Phosphoserine modification is found at Ser-269. 300-304 (DGMGQ) provides a ligand contact to GTP. An EF-hand 5 domain is found at 317–352 (EGIENSQEILKALDFSLDGNINLTELTLALENELLV). Residues 358–570 (HQAALASFKA…YQAQGRVLRL (213 aa)) adopt a coiled-coil conformation. Residue 420 to 423 (RKLD) participates in GTP binding. Positions 578 to 599 (EELDGHSGGIEPDQGPGSEECN) are disordered. Coiled coils occupy residues 620 to 926 (RDLC…ESQH), 958 to 1008 (EQLA…STEI), 1175 to 1323 (EDTR…MEKV), and 1425 to 1806 (AALL…IDKD). Positions 798 to 1495 (EMETECNRRV…QDLQITCGEM (698 aa)) are important for interaction with CEP170. Phosphoserine occurs at positions 1540 and 1826. 2 coiled-coil regions span residues 1852 to 1910 (VQNT…KEQS) and 1971 to 2093 (REQF…IASL). Disordered regions lie at residues 1899–1922 (KREC…MGSL) and 1988–2008 (SQHL…PQGN). Over residues 1988 to 1999 (SQHLQEELENRT) the composition is skewed to basic and acidic residues.

In terms of assembly, homooligomer. Interacts with GSK3B/GSK3-beta via its C-terminal domain. Interacts with C14ORF166, such interaction may prevent its phosphorylation by GSK3B. Interacts with AUNIP (via N-terminus). Identified in a complex with AUNIP and AURKA. Interacts with CCDC120. Interacts (via C-terminus) with CEP250. Interacts with CEP170. Interacts (via N-terminus) with the gamma-tubulin ring complex component TUBGCP3. Interacts with gamma-tubulin. Isoform 4 does not interact with CEP170 or CEP250. Post-translationally, phosphorylated by AURKA/Aurora kinase A and PKA kinases but not CK2 or AURKB/Aurora kinase B. As to expression, widely expressed. Highly expressed in spleen, bone marrow and skin. Weakly expressed in liver and small intestine. Expressed in brain.

It is found in the cytoplasm. The protein resides in the cytoskeleton. Its subcellular location is the microtubule organizing center. It localises to the centrosome. The protein localises to the centriole. In terms of biological role, centrosomal protein required for the positioning and anchorage of the microtubule minus-end in epithelial cells. May also act as a centrosome maturation factor. May play a role in microtubule nucleation, by recruiting the gamma-tubulin ring complex to the centrosome. Overexpression does not perturb nucleation or elongation of microtubules but suppresses release of microtubules. Required for centriole organization and microtubule anchoring at the mother centriole. The chain is Ninein from Mus musculus (Mouse).